A 349-amino-acid polypeptide reads, in one-letter code: Putative transport protein jhp_0514 (349 aa).

8 helical membrane passes run Phe6–Leu26, Met27–Asn47, Ser56–Tyr76, Leu143–Gly163, Val195–Ile215, Leu224–Ile244, Glu258–Ile278, and Ile300–Val320.

The protein belongs to the autoinducer-2 exporter (AI-2E) (TC 2.A.86) family.

It localises to the cell membrane. This chain is Putative transport protein jhp_0514, found in Helicobacter pylori (strain J99 / ATCC 700824) (Campylobacter pylori J99).